The following is a 59-amino-acid chain: UPF0434 protein PMI0721 (59 aa).

Belongs to the UPF0434 family.

The sequence is that of UPF0434 protein PMI0721 from Proteus mirabilis (strain HI4320).